The following is a 78-amino-acid chain: Large ribosomal subunit protein bL31 (78 aa).

The Zn(2+) site is built by cysteine 16, cysteine 18, cysteine 38, and cysteine 41.

This sequence belongs to the bacterial ribosomal protein bL31 family. Type A subfamily. Part of the 50S ribosomal subunit. The cofactor is Zn(2+).

Binds the 23S rRNA. The sequence is that of Large ribosomal subunit protein bL31 from Frankia casuarinae (strain DSM 45818 / CECT 9043 / HFP020203 / CcI3).